We begin with the raw amino-acid sequence, 441 residues long: N-succinylarginine dihydrolase (441 aa).

Residues 19 to 28 (AGLSFGNEAS), asparagine 110, and 137 to 138 (HR) contribute to the substrate site. Glutamate 174 is an active-site residue. Arginine 212 serves as a coordination point for substrate. The active site involves histidine 248. The substrate site is built by aspartate 250 and asparagine 359. The Nucleophile role is filled by cysteine 365.

The protein belongs to the succinylarginine dihydrolase family. Homodimer.

It carries out the reaction N(2)-succinyl-L-arginine + 2 H2O + 2 H(+) = N(2)-succinyl-L-ornithine + 2 NH4(+) + CO2. The protein operates within amino-acid degradation; L-arginine degradation via AST pathway; L-glutamate and succinate from L-arginine: step 2/5. Functionally, catalyzes the hydrolysis of N(2)-succinylarginine into N(2)-succinylornithine, ammonia and CO(2). The chain is N-succinylarginine dihydrolase from Erwinia tasmaniensis (strain DSM 17950 / CFBP 7177 / CIP 109463 / NCPPB 4357 / Et1/99).